Here is a 959-residue protein sequence, read N- to C-terminus: Transcription factor 1 (959 aa).

2 consecutive C2H2-type zinc fingers follow at residues 2-24 (VFCTYCGHSFTRDEHLERHILTH) and 30-52 (FKCFTCHMSFARRDLLQGHYTVH). Residues 79 to 105 (CSNCAKTKTKCDKKFPCSRCASRNLRC) constitute a DNA-binding region (zn(2)-C6 fungal-type). The interval 154–226 (PTGHVEESSK…SFPGFDDYNQ (73 aa)) is disordered. The segment covering 163–178 (KSSSPSGSPTSISHNS) has biased composition (low complexity).

Its subcellular location is the nucleus. Functionally, elsinochromes biosynthesis cluster-specific transcription factor that positively regulates the expression of cluster genes including RDT1, PKS1, PRF1 and HP1, and subsequent elsinochromes production. In Elsinoe fawcettii (Citrus scab fungus), this protein is Transcription factor 1.